A 402-amino-acid chain; its full sequence is Multidrug resistance protein MdtH (402 aa).

A run of 11 helical transmembrane segments spans residues 13-33 (YFLL…FPLI), 34-54 (SIRF…ALGL), 99-116 (PWVL…GTLF), 139-159 (LLMM…SWLL), 165-185 (LVCS…AWYL), 214-234 (VLTL…LPIM), 243-263 (AAVK…LYPI), 277-297 (LMAG…TSSL), 300-320 (LFTL…ARET), 340-360 (LGLA…FDAG), and 368-388 (LPWL…WWQF).

Belongs to the major facilitator superfamily. DHA1 family. MdtH (TC 2.A.1.2.21) subfamily.

It localises to the cell inner membrane. This is Multidrug resistance protein MdtH from Klebsiella pneumoniae (strain 342).